Reading from the N-terminus, the 654-residue chain is MSEKVGAMGGNKGGAFDDGVFDGVKKVIVGKDFNNVTYIKVEYEKDGKFEIREHGTNRGQLKEFSVDYPNEYITAVGGSYDTVFGYGSALIKSLLFKTSYGRTSPILGHTTLLGNPAGKEFMLESKYGGKLLGFHGRSGEALDAIGPHFFAVNSSLKHFKPQGGNGGSAWDDGAFDGVRKVLVGRNGKFVSYIRFEYAKGERTVPHAHGKRQEAPQEFVVDYPNEHITSVEGTIDGYLSSLKFKTSKGRTSPVFGNVVGSKFVFEETSFKLVGFCGRSGDAIDALGAHFAPLPAPTPAPAPAPAPVPVPAPAPVPAPSPAPAPSPAPAPAPAPAPAPTPAPAPAPPNKVEALGGNGGTIFDDGAFDHVRKVYIGQGDSGVAYVKFEYEKDGKRETGEHGKMTVLGTEEFEVESDDYITSAEVSVDNVFGFKSEIVTSLVFKTFKGITSQPFGMESEKKLELKDGKGGKLVGFHGKASDVLYALGAYFAPTTNSITPSTPSTAKKLQARGGNGGASWDDGVFDGVRKILVGQGNDGVAFVTFEYNKGSQAILGDGHGKQTLLGTETFELDYPSEYITSVEGYYDKIFGVEAEVVTSLTFKTNKRTSQPFGMTAGEHFELKEDGYKIVGFHGKAGDLVHQIGVHAVPIFTNYRCVF.

Jacalin-type lectin domains follow at residues 2 to 151 (SEKV…HFFA), 156 to 291 (LKHF…HFAP), 346 to 489 (PNKV…YFAP), and 502 to 645 (AKKL…HAVP). Over residues 314 to 346 (VPAPSPAPAPSPAPAPAPAPAPAPTPAPAPAPP) the composition is skewed to pro residues. The disordered stretch occupies residues 314-355 (VPAPSPAPAPSPAPAPAPAPAPAPTPAPAPAPPNKVEALGGN).

Belongs to the jacalin lectin family. As to expression, expressed in flowers. Detected mainly in ovules and styles of immature flowers, but also in pistils, styles, stamens, petals and embryos. Not detected in leaves.

In Arabidopsis thaliana (Mouse-ear cress), this protein is Myrosinase-binding protein 2 (MBP2).